The following is a 352-amino-acid chain: Dysbindin (352 aa).

At S11 the chain carries Phosphoserine. A coiled-coil region spans residues 88-176 (EKKRTSLNEL…EAFKAELDTE (89 aa)). Residues 173 to 325 (LDTEHTQKAL…DEEEVQVDTA (153 aa)) are dysbindin. Residues 243–256 (LMDISDQEALDVFL) carry the Nuclear export signal motif. Residues 267–352 (SPGVEMESNP…SDQCDSTQDI (86 aa)) are disordered. Residues 274–285 (SNPNQNEMSLQI) show a composition bias toward polar residues. A compositionally biased stretch (low complexity) spans 286–301 (PSPSESASQPPASPSA). S315, S340, and S343 each carry phosphoserine.

This sequence belongs to the dysbindin family. In terms of assembly, interacts with AP3M1 and TRIM32. Interacts (isoform 1 and isoform 2 only) with the DNA-dependent protein kinase complex DNA-PK; the interaction phosphorylates DTNBP1 in vitro. Interacts directly in this complex with XRCC5 and XRCC6. Interacts with XPO1; the interaction exports DTNBP1 out of the nucleus. Component of the biogenesis of lysosome-related organelles complex 1 (BLOC-1) composed of BLOC1S1, BLOC1S2, BLOC1S3, BLOC1S4, BLOC1S5, BLOC1S6, DTNBP1/BLOC1S7 and SNAPIN/BLOC1S8. The BLOC-1 complex associates with the AP-3 protein complex and membrane protein cargos. This BLOC-1 complex also associates with the BLOC-2 complex in endosomes. Binds to DTNA and DTNB but may not be a physiological binding partner. Interacts (via its coiled coil domain) with KXD1. Interacts with AP3B2, BLOC1S5, BLOC1S6, CMYA5, PI4K2, RNF151 and SNAPIN/BLOC1S8. Interacts with XPO1; the interaction exports DTNBP1 out of the nucleus. In terms of processing, ubiquitinated by TRIM32. Ubiquitination leads to DTNBP1 degradation. In terms of tissue distribution, detected in brain, in hippocampus and dentate gyrus neurons. Detected at axon bundles and axon terminals, notably in the cerebellum and hippocampus. Detected in neuropil in hippocampus, lateral septum, basal ganglia and substantia nigra. Highly expressed in pyramidal cells of hippocampus CA2 and CA3. Detected at the heart and skeletal muscle sarcolemma (at protein level). Ubiquitously expressed. The highest expression is observed in testis, liver, kidney, brain, heart and lung. Expressed at lower levels in stomach and small intestine.

Its subcellular location is the cytoplasm. It is found in the cytoplasmic vesicle membrane. The protein resides in the endosome membrane. It localises to the melanosome membrane. The protein localises to the postsynaptic density. Its subcellular location is the endoplasmic reticulum. It is found in the nucleus. The protein resides in the cytoplasmic vesicle. It localises to the secretory vesicle. The protein localises to the synaptic vesicle membrane. Its subcellular location is the postsynaptic cell membrane. Component of the BLOC-1 complex, a complex that is required for normal biogenesis of lysosome-related organelles (LRO), such as platelet dense granules and melanosomes. In concert with the AP-3 complex, the BLOC-1 complex is required to target membrane protein cargos into vesicles assembled at cell bodies for delivery into neurites and nerve terminals. The BLOC-1 complex, in association with SNARE proteins, is also proposed to be involved in neurite extension. Associates with the BLOC-2 complex to facilitate the transport of TYRP1 independent of AP-3 function. Plays a role in synaptic vesicle trafficking and in neurotransmitter release. Plays a role in the regulation of cell surface exposure of DRD2. May play a role in actin cytoskeleton reorganization and neurite outgrowth. May modulate MAPK8 phosphorylation. Appears to promote neuronal transmission and viability through regulating the expression of SNAP25 and SYN1, modulating PI3-kinase-Akt signaling and influencing glutamatergic release. Regulates the expression of SYN1 through binding to its promoter. Modulates prefrontal cortical activity via the dopamine/D2 pathway. This Mus musculus (Mouse) protein is Dysbindin (Dtnbp1).